A 61-amino-acid polypeptide reads, in one-letter code: Small ribosomal subunit protein uS14 (61 aa).

Residues C24, C27, C40, and C43 each contribute to the Zn(2+) site.

The protein belongs to the universal ribosomal protein uS14 family. Zinc-binding uS14 subfamily. In terms of assembly, part of the 30S ribosomal subunit. Contacts proteins S3 and S10. Requires Zn(2+) as cofactor.

Functionally, binds 16S rRNA, required for the assembly of 30S particles and may also be responsible for determining the conformation of the 16S rRNA at the A site. The chain is Small ribosomal subunit protein uS14 from Aliarcobacter butzleri (strain RM4018) (Arcobacter butzleri).